A 460-amino-acid chain; its full sequence is GTPase Der (460 aa).

EngA-type G domains follow at residues 9–171 (KTIA…SLNQ) and 199–370 (IQVG…ECFS). GTP is bound by residues 15-22 (GQPNVGKS), 62-66 (DTGGM), 123-126 (NKID), 205-212 (GRVNVGKS), 252-256 (DTAGI), and 316-319 (NKWD). Positions 371–455 (RRIPTSLLNS…PLILNAKDKK (85 aa)) constitute a KH-like domain.

Belongs to the TRAFAC class TrmE-Era-EngA-EngB-Septin-like GTPase superfamily. EngA (Der) GTPase family. In terms of assembly, associates with the 50S ribosomal subunit.

GTPase that plays an essential role in the late steps of ribosome biogenesis. The protein is GTPase Der of Helicobacter pylori (strain G27).